The primary structure comprises 467 residues: Acid phosphatase PHO12 (467 aa).

The N-terminal stretch at 1-17 is a signal peptide; sequence MLKSAVYSILAASLVNA. Histidine 75 (nucleophile) is an active-site residue. N-linked (GlcNAc...) asparagine glycosylation is found at asparagine 97, asparagine 162, asparagine 192, asparagine 250, and asparagine 315. Residue aspartate 338 is the Proton donor of the active site. 5 N-linked (GlcNAc...) asparagine glycosylation sites follow: asparagine 356, asparagine 390, asparagine 439, asparagine 445, and asparagine 461.

Belongs to the histidine acid phosphatase family. Glycosylated during secretion across the membrane.

It catalyses the reaction a phosphate monoester + H2O = an alcohol + phosphate. In Saccharomyces cerevisiae (strain ATCC 204508 / S288c) (Baker's yeast), this protein is Acid phosphatase PHO12 (PHO12).